The chain runs to 73 residues: Conotoxin Cl14.8 (73 aa).

Positions 1–19 are cleaved as a signal peptide; sequence MKLSVTFIALMLTMTLTQG. Residues 20–47 constitute a propeptide that is removed on maturation; it reads FVLQAIDGRDNSGLDDLSEADSMEHQLQ.

It belongs to the conotoxin L superfamily. In terms of processing, contains 2 disulfide bonds. Expressed by the venom duct.

Its subcellular location is the secreted. This chain is Conotoxin Cl14.8, found in Californiconus californicus (California cone).